The following is a 940-amino-acid chain: MSDYKFTLNLPETEFPMRGNLANREPEMLERWTKDGLYQQIRDSRIGRTPFILHDGPPYANGSIHIGHSVNKILKDIIIKSKTMSGFDAPYVPGWDCHGLPIELKVEQKVGKPGQKISAAEFREECRKYAAEQVNGQREDFIRLGVLGDWQNPYLTMDFSTEANIVRSLSKVIESGHLHKGVKPVHWCTDCGSALAEAEVEYEDKTSPAIDVAFVAADSKAVAAKFGVSDYSHPVSMVIWTTTPWTLPANRALSLSPELDYSLVEFEKDGVTQALILAEVLVESCLTRYNVESHTVLGSAKGAAFELVRFNHPFLDFDVPAILGDHVTTDAGTGIVHTAPGHGQDDFVVGQKYGLEVANPVGDNGVYKPDTEYFAGQHVFKANDNVVALLREKSALLNHVAYRHSYPHCWRHKTPIIFRATPQWFISMDNHGLRTQALKEIEQTQWIPDWGQSRIEKMVENRPDWCISRQRTWGVPITLFVNRETEELHPDSVSLMERVACRIEQQGIQAWWDLDAAELLGDEAEQYRKVTDTLDVWFDSGSTFSSVVAARPEFHGHGVDLYLEGSDQHRGWFMSSLMISTAMNGKAPYKQVLTHGFTVDGKGRKMSKSIGNVIAPQTVTNKLGADILRLWVAATDYSGEMTVSDEILNRSADAYRRIRNTARFLLANLNGFEPAKDLVAVEDMVALDRWVVRRAAALQQEIIEAYEQYNFHIVTQKLMQFCSVELGSFYLDIIKDRQYTAKQEGHARRSCQSALYLISEAMVRWIAPILSFTADEVWQLLPGERDAYVFTQEWYQGLKSVTLATDLSDDYWQQLLTVRNEVNKVIEQARRDKRIGGSLEAEVTLFADAALTEQLTHIGDELRFVLLTSEAKVLPLADATSEAVETELASLKLVVASSTAEKCERCWHHREEVGTIEAHPTLCTRCVTNIEGDGEVRLFA.

Residues 58–68 (PYANGSIHIGH) carry the 'HIGH' region motif. Glu564 is a binding site for L-isoleucyl-5'-AMP. The 'KMSKS' region signature appears at 605–609 (KMSKS). Lys608 provides a ligand contact to ATP. The Zn(2+) site is built by Cys903, Cys906, Cys923, and Cys926.

The protein belongs to the class-I aminoacyl-tRNA synthetase family. IleS type 1 subfamily. In terms of assembly, monomer. Requires Zn(2+) as cofactor.

The protein resides in the cytoplasm. It carries out the reaction tRNA(Ile) + L-isoleucine + ATP = L-isoleucyl-tRNA(Ile) + AMP + diphosphate. Functionally, catalyzes the attachment of isoleucine to tRNA(Ile). As IleRS can inadvertently accommodate and process structurally similar amino acids such as valine, to avoid such errors it has two additional distinct tRNA(Ile)-dependent editing activities. One activity is designated as 'pretransfer' editing and involves the hydrolysis of activated Val-AMP. The other activity is designated 'posttransfer' editing and involves deacylation of mischarged Val-tRNA(Ile). In Shewanella baltica (strain OS195), this protein is Isoleucine--tRNA ligase.